Here is a 160-residue protein sequence, read N- to C-terminus: Prostaglandin E synthase 3 (160 aa).

In terms of domain architecture, CS spans 1–90 (MQPASAKWYD…ESGQSWPRLT (90 aa)). At K33 the chain carries N6-acetyllysine. A Glycyl lysine isopeptide (Lys-Gly) (interchain with G-Cter in SUMO2) cross-link involves residue K35. Position 44 is a phosphoserine (S44). A Glycyl lysine isopeptide (Lys-Gly) (interchain with G-Cter in SUMO2) cross-link involves residue K65. A phosphoserine mark is found at S85, S100, S113, and S118. Positions 118–160 (SNFDRFSEMMDHMGGDEDVDLPEVDGADDDSQDSDDEKMPDLE) are disordered. Over residues 122-132 (RFSEMMDHMGG) the composition is skewed to basic and acidic residues. A compositionally biased stretch (acidic residues) spans 133-153 (DEDVDLPEVDGADDDSQDSDD). A phosphoserine mark is found at S148 and S151. Residues 157–160 (PDLE) carry the PXLE motif motif.

This sequence belongs to the p23/wos2 family. Probably forms a complex composed of chaperones HSP90 and HSP70, co-chaperones STIP1/HOP, CDC37, PPP5C, PTGES3/p23, TSC1 and client protein TSC2. Binds to the progesterone receptor. Interacts with TERT; the interaction, together with HSP90AA1, is required for correct assembly and stabilization of the telomerase holoenzyme complex. Interacts (via PXLE motif) with EGLN1/PHD2, recruiting EGLN1/PHD2 to the HSP90 pathway to facilitate HIF alpha proteins hydroxylation. Interacts with HSP90AA1, FLCN, FNIP1 and FNIP2. Proteolytically cleaved by caspase-7 (CASP7) in response to apoptosis, leading to its inactivation. Expressed in testis, kidney, bladder and ovary.

It is found in the cytoplasm. It catalyses the reaction prostaglandin H2 = prostaglandin E2. It functions in the pathway lipid metabolism; prostaglandin biosynthesis. Cytosolic prostaglandin synthase that catalyzes the oxidoreduction of prostaglandin endoperoxide H2 (PGH2) to prostaglandin E2 (PGE2). Molecular chaperone that localizes to genomic response elements in a hormone-dependent manner and disrupts receptor-mediated transcriptional activation, by promoting disassembly of transcriptional regulatory complexes. Facilitates HIF alpha proteins hydroxylation via interaction with EGLN1/PHD2, leading to recruit EGLN1/PHD2 to the HSP90 pathway. The polypeptide is Prostaglandin E synthase 3 (Ptges3) (Mus musculus (Mouse)).